A 65-amino-acid chain; its full sequence is uncharacterized protein (65 aa).

This is an uncharacterized protein from Acidianus filamentous virus 1 (isolate United States/Yellowstone) (AFV-1).